We begin with the raw amino-acid sequence, 300 residues long: Uricase (300 aa).

Ala-2 is modified (N-acetylalanine). An N6-acetyllysine; alternate mark is found at Lys-6 and Lys-19. N6-succinyllysine; alternate is present on residues Lys-6 and Lys-19. Lys-19 acts as the Charge relay system in catalysis. 2 positions are modified to N6-acetyllysine: Lys-23 and Lys-32. Phosphoserine is present on residues Ser-35 and Ser-59. Thr-64 functions as the Charge relay system in the catalytic mechanism. Positions 64 and 65 each coordinate urate. Residues Lys-114, Lys-118, and Lys-160 each carry the N6-acetyllysine modification. Phe-166 lines the urate pocket. 2 positions are modified to N6-acetyllysine: Lys-171 and Lys-181. Arg-183 provides a ligand contact to urate. 2 positions are modified to N6-acetyllysine; alternate: Lys-217 and Lys-224. N6-succinyllysine; alternate occurs at positions 217 and 224. Residue Ser-228 is modified to Phosphoserine. Urate is bound by residues Val-231, Gln-232, and Asn-258. His-260 acts as the Charge relay system in catalysis. Lys-274 carries the post-translational modification N6-acetyllysine. Position 285 is a phosphotyrosine (Tyr-285). Positions 298–300 (SRL) match the Microbody targeting signal motif.

The protein belongs to the uricase family.

It localises to the peroxisome. The enzyme catalyses urate + O2 + H2O = 5-hydroxyisourate + H2O2. Its pathway is purine metabolism; urate degradation; (S)-allantoin from urate: step 1/3. Catalyzes the oxidation of uric acid to 5-hydroxyisourate, which is further processed to form (S)-allantoin. This chain is Uricase (UOX), found in Oryctolagus cuniculus (Rabbit).